The primary structure comprises 156 residues: NAD(P)H-quinone oxidoreductase subunit N (156 aa).

The protein belongs to the complex I NdhN subunit family. As to quaternary structure, NDH-1 can be composed of about 15 different subunits; different subcomplexes with different compositions have been identified which probably have different functions.

The protein resides in the cellular thylakoid membrane. It carries out the reaction a plastoquinone + NADH + (n+1) H(+)(in) = a plastoquinol + NAD(+) + n H(+)(out). It catalyses the reaction a plastoquinone + NADPH + (n+1) H(+)(in) = a plastoquinol + NADP(+) + n H(+)(out). Functionally, NDH-1 shuttles electrons from an unknown electron donor, via FMN and iron-sulfur (Fe-S) centers, to quinones in the respiratory and/or the photosynthetic chain. The immediate electron acceptor for the enzyme in this species is believed to be plastoquinone. Couples the redox reaction to proton translocation, and thus conserves the redox energy in a proton gradient. Cyanobacterial NDH-1 also plays a role in inorganic carbon-concentration. This chain is NAD(P)H-quinone oxidoreductase subunit N, found in Prochlorococcus marinus subsp. pastoris (strain CCMP1986 / NIES-2087 / MED4).